Here is an 89-residue protein sequence, read N- to C-terminus: MALLDFFLSRKKNTANIAKERLQIIVAERRRGDAEPHYLPQLRKDILEVICKYVQIDPEMVSVQLEQRDGDISILELNVTLPETEESKP.

It belongs to the MinE family.

Prevents the cell division inhibition by proteins MinC and MinD at internal division sites while permitting inhibition at polar sites. This ensures cell division at the proper site by restricting the formation of a division septum at the midpoint of the long axis of the cell. This is Cell division topological specificity factor from Klebsiella pneumoniae (strain 342).